The chain runs to 156 residues: Endoribonuclease YbeY (156 aa).

H105, H109, and D115 together coordinate Zn(2+).

The protein belongs to the endoribonuclease YbeY family. Requires Zn(2+) as cofactor.

It localises to the cytoplasm. Its function is as follows. Single strand-specific metallo-endoribonuclease involved in late-stage 70S ribosome quality control and in maturation of the 3' terminus of the 16S rRNA. The protein is Endoribonuclease YbeY of Chlorobium chlorochromatii (strain CaD3).